The sequence spans 486 residues: MSPQIKLYLNPPKNNQYYSNHDHISGSVSVDFGKPVSIKQINVSFKGFIETMTKIDPVVMRNQAALMSPMQDAKTIHTLVNIGQKVFPPENVLSAIEGDLKPFQLKEGVHEYEFQLPKVPKKPKCLSSHTKGLMTYLDKDRVRLPPSFNNDWKNMLRFDNLDLFFYSFGKILYMVEVQIELGKPKSWYRPFEKVLTEIQLVEFIPQSKDLTFKLDDKPSKEVLESFKNSNGEQEEKTSNKLQTEKATVPTNAPLVDVMTQKPDVRVYRSTYKIGLPDDDSVMWLEARSPNLRRTFRGDPIFAGGSGKFDDIYIVMMGDKALIDRLRVIPTRVQLNLLETVTYLSQGVANQNVSSLKLAEDRIPLEKRSTVLKNSWGRYVQFSSSNPNQCKWECELRLKNHPNLKKLKFNEEDYRHRGNRLYSFKSCSIKRIFSFQLLVDWDIVGFKRQSEIIVDPIQVFADRNGRNQEEALPLYVPPPSYTESTQY.

The protein belongs to the ART10 family.

The protein localises to the cytoplasm. Its function is as follows. May regulate endocytosis by recruiting RSP5 ubiquitin ligase activity to specific plasma membrane proteins in response to extracellular stimuli. The polypeptide is Arrestin-related trafficking adapter 10 (ART10) (Zygosaccharomyces rouxii (strain ATCC 2623 / CBS 732 / NBRC 1130 / NCYC 568 / NRRL Y-229)).